The chain runs to 336 residues: Transmembrane protein 120A (336 aa).

At 1 to 131 (MNSPALQDCV…KQSKFAYKDE (131 aa)) the chain is on the cytoplasmic side. CoA is bound at residue Lys129. Residues 132–151 (YEKFKLYLTMILMVLSFICR) traverse the membrane as a helical segment. At 152–157 (FVLNSR) the chain is on the extracellular side. A helical transmembrane segment spans residues 158 to 176 (VTDAVFNFLLVWYYCTLTI). Residues 177 to 189 (RESILINNGSRIK) are Cytoplasmic-facing. Residues Ser186 and Arg187 each contribute to the CoA site. Residues 190–208 (GWWVLNHYISTFLSGVMLT) form a helical membrane-spanning segment. Residues 209-217 (WPDGLMYQM) are Extracellular-facing. The chain crosses the membrane as a helical span at residues 218–239 (FRNQFLSFSMYQSFVQFLQYYY). Residues Gln236, Tyr239, and Gln240 each contribute to the CoA site. At 240–269 (QSGCLYRLRALGERHNMDLTVEGFQSWMWR) the chain is on the cytoplasmic side. Residues 270–293 (GLTFLLPFLFFGQFWQLYNAITLF) traverse the membrane as a helical segment. The Extracellular portion of the chain corresponds to 294 to 303 (KLARHPECKE). A helical transmembrane segment spans residues 304–329 (WQVIMCGLPFLVHFLGNFFTTLRVVH). Residues 330-336 (QKFQKQN) are Cytoplasmic-facing. Lys331 is a CoA binding site.

It belongs to the TMEM120 family. In terms of assembly, homodimer.

Its subcellular location is the cell membrane. The protein localises to the nucleus inner membrane. It is found in the endoplasmic reticulum. In terms of biological role, multifunctional protein involved in mechanosensation, and plays an essential role in lipid metabolism. May function as a potential ion channel involved in sensing mechanical stimuli. TMEM120A is structurally similar to a lipid-modifying enzyme, ELOVL7, and contains a bound coenzyme A molecule, which suggests it might function as an enzyme in lipid metabolism. The sequence is that of Transmembrane protein 120A from Xenopus tropicalis (Western clawed frog).